The following is a 404-amino-acid chain: uncharacterized protein (404 aa).

A compositionally biased stretch (polar residues) spans 262 to 278 (VSTGDTSPYGTEDSSPA). Disordered regions lie at residues 262 to 307 (VSTG…SPSL) and 320 to 340 (KKSH…GGAD). Residues S268, S276, and S279 each carry the phosphoserine modification. Residues T290 and T293 each carry the phosphothreonine modification. Phosphoserine is present on residues S304, S306, S324, S358, and S362. Basic and acidic residues predominate over residues 320–336 (KKSHSANDSEEFFREDD).

This is an uncharacterized protein from Rattus norvegicus (Rat).